The sequence spans 438 residues: Trigger factor (438 aa).

Positions 163-248 constitute a PPIase FKBP-type domain; the sequence is GDKLNIDFEG…VKRIETTEAR (86 aa).

Belongs to the FKBP-type PPIase family. Tig subfamily.

The protein localises to the cytoplasm. It carries out the reaction [protein]-peptidylproline (omega=180) = [protein]-peptidylproline (omega=0). Involved in protein export. Acts as a chaperone by maintaining the newly synthesized protein in an open conformation. Functions as a peptidyl-prolyl cis-trans isomerase. The sequence is that of Trigger factor from Syntrophomonas wolfei subsp. wolfei (strain DSM 2245B / Goettingen).